The primary structure comprises 433 residues: Adenylosuccinate synthetase (433 aa).

GTP contacts are provided by residues 11 to 17 and 39 to 41; these read GDEGKGK and GHT. D12 functions as the Proton acceptor in the catalytic mechanism. Mg(2+)-binding residues include D12 and G39. IMP contacts are provided by residues 12-15, 37-40, T134, R148, N230, T245, and R309; these read DEGK and NAGH. The active-site Proton donor is H40. Residue 305–311 participates in substrate binding; it reads VTTGRKR. Residues R311, 337 to 339, and 419 to 421 each bind GTP; these read KLD and GTG.

This sequence belongs to the adenylosuccinate synthetase family. Homodimer. Mg(2+) is required as a cofactor.

It localises to the cytoplasm. It carries out the reaction IMP + L-aspartate + GTP = N(6)-(1,2-dicarboxyethyl)-AMP + GDP + phosphate + 2 H(+). It functions in the pathway purine metabolism; AMP biosynthesis via de novo pathway; AMP from IMP: step 1/2. Plays an important role in the de novo pathway and in the salvage pathway of purine nucleotide biosynthesis. Catalyzes the first committed step in the biosynthesis of AMP from IMP. The sequence is that of Adenylosuccinate synthetase from Saccharomyces cerevisiae (strain Lalvin EC1118 / Prise de mousse) (Baker's yeast).